The primary structure comprises 190 residues: Ribosome maturation factor RimM (190 aa).

One can recognise a PRC barrel domain in the interval Glu-95 to Leu-177. Positions Leu-170 to Glu-190 are disordered. A compositionally biased stretch (pro residues) spans Pro-181–Glu-190.

The protein belongs to the RimM family. Binds ribosomal protein uS19.

It is found in the cytoplasm. In terms of biological role, an accessory protein needed during the final step in the assembly of 30S ribosomal subunit, possibly for assembly of the head region. Essential for efficient processing of 16S rRNA. May be needed both before and after RbfA during the maturation of 16S rRNA. It has affinity for free ribosomal 30S subunits but not for 70S ribosomes. The chain is Ribosome maturation factor RimM from Rhizobium rhizogenes (strain K84 / ATCC BAA-868) (Agrobacterium radiobacter).